The chain runs to 333 residues: Testin-2 (333 aa).

The signal sequence occupies residues 1–17 (MIAVLFLAILCLEVDST). 3 cysteine pairs are disulfide-bonded: C135–C178, C169–C211, and C269–C322. A glycan (N-linked (GlcNAc...) asparagine) is linked at N173. Catalysis depends on residues H276 and N300.

The protein belongs to the peptidase C1 family. As to expression, sertoli cells.

It localises to the secreted. This is Testin-2 (Testin) from Rattus norvegicus (Rat).